The following is a 564-amino-acid chain: Homeobox protein unc-62 (564 aa).

5 disordered regions span residues 40–59 (NEQFNDGYGPPPGSASADPA), 216–270 (ERAS…VMGG), 293–313 (SSSSNQAGDHPLANGGTLHST), 328–397 (PSTC…KVPK), and 455–503 (IDQN…PSSL). The 86-residue stretch at 133 to 218 (SSDVCSSASF…PLDIVGDERA (86 aa)) folds into the MEIS N-terminal domain. Residues 219–230 (SSSQPPMSPGSM) are compositionally biased toward low complexity. 2 stretches are compositionally biased toward polar residues: residues 328 to 344 (PSTCSSGGLRQDSTPLS) and 381 to 390 (LSDSANGSQN). A DNA-binding region (homeobox; TALE-type) is located at residues 392–454 (KRKVPKVFSK…NARRRIVQPM (63 aa)). Composition is skewed to polar residues over residues 455-469 (IDQNNRAGRSGQMNV) and 494-503 (ANYSPDPSSL).

Belongs to the TALE/MEIS homeobox family. In terms of assembly, forms a heterodimer with homeobox ceh-60.

Its subcellular location is the nucleus. Functionally, acts redundantly with ceh-20 and ceh-40 to perform overlapping roles during embryogenesis. Required for postembryonic development of the ectoderm, including the Q, V and P cell lineages, playing a crucial role in ensuring that these cells and their descendants undergo their invariant patterns of cell division, migration, fusion and morphogenesis. Has a role in the mig-13 pathway to promote anterior migration of neuroblasts in the Q lineage. Required for multiple roles in regulating vulva development. Associates with homeobox ceh-60 to regulate gene expression, including repression of genes involved in innate immunity and activation of genes involved in vitellogenesis. Involved in lipid homeostasis, contributing to the formation of the cuticle. This is Homeobox protein unc-62 (unc-62) from Caenorhabditis elegans.